Here is a 462-residue protein sequence, read N- to C-terminus: MFTKRKEKIHFIGIGGIGMSAIASVLNAIGFTITGSDLAKTAKTESLESSGIKVYYGHKAQNIEDDVTAVVTSSAISPTNEEIIEAKSKKITVISRGEMLAELMRLRYGIAISGSHGKTTTTSLISQIMMHAGLNPVCIIGGNHFNLKSNAACNDLSSEYMVCEADESDGSFLRLSPVINVVTNIDNDHLDYYGNVEALRVAFLEFINKVPFYGCSFLCFEDNVVKDLSKSANKKYYSYGFSKDYDFYVDRDSIRVEAPITYFTAYHNSECLGEFSVPLIGIHNVLNSLASIGVGIHLGIDIADIKEGLKTFEGVGRRLNKLYDKEITLFDDYAHHPTEIKATLSSVRNAYKNRRIIAVFQPHRYSRTELLLNDFEYAFNDADEVIISDIYAAGESPIPGISGEIICDVVRKQNNHVRYIPNIEDVLPVLDDIKKDGDIILTLGAGNIVRISNEYARKLQNG.

An ATP-binding site is contributed by 114-120; that stretch reads GSHGKTT.

The protein belongs to the MurCDEF family.

Its subcellular location is the cytoplasm. It catalyses the reaction UDP-N-acetyl-alpha-D-muramate + L-alanine + ATP = UDP-N-acetyl-alpha-D-muramoyl-L-alanine + ADP + phosphate + H(+). Its pathway is cell wall biogenesis; peptidoglycan biosynthesis. Its function is as follows. Cell wall formation. The protein is UDP-N-acetylmuramate--L-alanine ligase of Brachyspira hyodysenteriae (strain ATCC 49526 / WA1).